Reading from the N-terminus, the 762-residue chain is uncharacterized protein (762 aa).

Positions 1–26 (MENLKSASPEEDSPRHGDNMGKPKRI) are disordered. The span at 12–21 (DSPRHGDNMG) shows a compositional bias: basic and acidic residues. The zn(2)-C6 fungal-type DNA-binding region spans 30 to 57 (CDMCRKRKIRCDGKQPACSNCVSHGIPC). The segment at 647-668 (QSHVPPRISSNHSDTSVKSNSP) is disordered.

It localises to the nucleus. This is an uncharacterized protein from Schizosaccharomyces pombe (strain 972 / ATCC 24843) (Fission yeast).